Consider the following 362-residue polypeptide: tRNA-specific 2-thiouridylase MnmA 1 (362 aa).

ATP-binding positions include 12-19 (GMSGGVDS) and M38. The active-site Nucleophile is C104. C104 and C200 are disulfide-bonded. An ATP-binding site is contributed by G128. Residues 150 to 152 (KDQ) form an interaction with tRNA region. C200 (cysteine persulfide intermediate) is an active-site residue. The segment at 306–307 (RY) is interaction with tRNA.

Belongs to the MnmA/TRMU family.

Its subcellular location is the cytoplasm. It carries out the reaction S-sulfanyl-L-cysteinyl-[protein] + uridine(34) in tRNA + AH2 + ATP = 2-thiouridine(34) in tRNA + L-cysteinyl-[protein] + A + AMP + diphosphate + H(+). In terms of biological role, catalyzes the 2-thiolation of uridine at the wobble position (U34) of tRNA, leading to the formation of s(2)U34. The chain is tRNA-specific 2-thiouridylase MnmA 1 from Clostridium tetani (strain Massachusetts / E88).